Reading from the N-terminus, the 304-residue chain is Small ribosomal subunit biogenesis GTPase RsgA (304 aa).

Positions 78–237 (HSFLTRPPVA…VADTPGFNRP (160 aa)) constitute a CP-type G domain. Residues 127-130 (TKTD) and 179-187 (GPSGVGKSS) contribute to the GTP site. Zn(2+) is bound by residues cysteine 262, cysteine 267, histidine 269, and cysteine 275.

It belongs to the TRAFAC class YlqF/YawG GTPase family. RsgA subfamily. Monomer. Associates with 30S ribosomal subunit, binds 16S rRNA. Zn(2+) serves as cofactor.

Its subcellular location is the cytoplasm. In terms of biological role, one of several proteins that assist in the late maturation steps of the functional core of the 30S ribosomal subunit. Helps release RbfA from mature subunits. May play a role in the assembly of ribosomal proteins into the subunit. Circularly permuted GTPase that catalyzes slow GTP hydrolysis, GTPase activity is stimulated by the 30S ribosomal subunit. This is Small ribosomal subunit biogenesis GTPase RsgA from Synechococcus sp. (strain CC9605).